A 283-amino-acid polypeptide reads, in one-letter code: Probable aquaporin NIP4-2 (283 aa).

M1 carries the post-translational modification N-acetylmethionine. Residues M1–C21 are compositionally biased toward basic and acidic residues. The tract at residues M1 to D23 is disordered. The next 2 membrane-spanning stretches (helical) occupy residues G51–G71 and G77–S97. The NPA 1 signature appears at N102–A104. Helical transmembrane passes span V120–L140, A161–T181, and L189–S209. Residues N214–A216 carry the NPA 2 motif. The helical transmembrane segment at I231–F251 threads the bilayer. Phosphoserine is present on S267.

Belongs to the MIP/aquaporin (TC 1.A.8) family. NIP (TC 1.A.8.12) subfamily.

It localises to the membrane. Functionally, aquaporins facilitate the transport of water and small neutral solutes across cell membranes. The chain is Probable aquaporin NIP4-2 (NIP4-2) from Arabidopsis thaliana (Mouse-ear cress).